The chain runs to 140 residues: Small ribosomal subunit protein uS12 (140 aa).

Residues 33–55 (KEQTNVSSPQKRGVCTRVGTMTP) are disordered.

The protein belongs to the universal ribosomal protein uS12 family. Part of the 30S ribosomal subunit. Contacts proteins S8 and S17. May interact with IF1 in the 30S initiation complex.

Its function is as follows. With S4 and S5 plays an important role in translational accuracy. In terms of biological role, interacts with and stabilizes bases of the 16S rRNA that are involved in tRNA selection in the A site and with the mRNA backbone. Located at the interface of the 30S and 50S subunits, it traverses the body of the 30S subunit contacting proteins on the other side and probably holding the rRNA structure together. The combined cluster of proteins S8, S12 and S17 appears to hold together the shoulder and platform of the 30S subunit. In Geobacillus kaustophilus (strain HTA426), this protein is Small ribosomal subunit protein uS12.